Consider the following 127-residue polypeptide: Large ribosomal subunit protein bL20 (127 aa).

It belongs to the bacterial ribosomal protein bL20 family.

Its function is as follows. Binds directly to 23S ribosomal RNA and is necessary for the in vitro assembly process of the 50S ribosomal subunit. It is not involved in the protein synthesizing functions of that subunit. The chain is Large ribosomal subunit protein bL20 (rplT) from Streptomyces coelicolor (strain ATCC BAA-471 / A3(2) / M145).